Consider the following 251-residue polypeptide: MRKPLIAGNWKMNKTDGETKQFINDLKCLDISDNVEACIISPFTSLKTLTEDLRNSNISTGAQNMYYEECGAFTGEVSPNMLKDLGIDYVIIGHSERRTIFKEDDELLNKKIASALKHDIKPILCCGENLEQRESNRHEEVVESQIRLDLKGINEKDIMSKLVIAYEPIWAIGTGKTASSDDAQSMCKFIRNLLSKMYSKDLADSVRIQYGGSVKPENILDIMSKEDIDGALVGGASLEAESFSKLINYGK.

A substrate-binding site is contributed by 9 to 11; sequence NWK. Residue His-94 is the Electrophile of the active site. Catalysis depends on Glu-167, which acts as the Proton acceptor. Substrate contacts are provided by residues Gly-173, Ser-213, and 234 to 235; that span reads GG.

It belongs to the triosephosphate isomerase family. Homodimer.

It is found in the cytoplasm. The enzyme catalyses D-glyceraldehyde 3-phosphate = dihydroxyacetone phosphate. The protein operates within carbohydrate biosynthesis; gluconeogenesis. Its pathway is carbohydrate degradation; glycolysis; D-glyceraldehyde 3-phosphate from glycerone phosphate: step 1/1. Involved in the gluconeogenesis. Catalyzes stereospecifically the conversion of dihydroxyacetone phosphate (DHAP) to D-glyceraldehyde-3-phosphate (G3P). In Finegoldia magna (strain ATCC 29328 / DSM 20472 / WAL 2508) (Peptostreptococcus magnus), this protein is Triosephosphate isomerase.